The primary structure comprises 229 residues: Probable GTP-binding protein EngB (229 aa).

One can recognise an EngB-type G domain in the interval 53–228 (DLPEVAFAGR…RAEIVRLCID (176 aa)). GTP is bound by residues 61–68 (GRSNVGKS), 88–92 (GRTRE), 106–109 (DLPG), 173–176 (TKAD), and 207–209 (TSS). Serine 68 and threonine 90 together coordinate Mg(2+).

The protein belongs to the TRAFAC class TrmE-Era-EngA-EngB-Septin-like GTPase superfamily. EngB GTPase family. The cofactor is Mg(2+).

In terms of biological role, necessary for normal cell division and for the maintenance of normal septation. The protein is Probable GTP-binding protein EngB of Caulobacter vibrioides (strain NA1000 / CB15N) (Caulobacter crescentus).